A 332-amino-acid chain; its full sequence is Myogenic-determination protein (332 aa).

The segment at 22-54 (HNGYGQPTHPGYGFSAYSQQNPIAHPGQNPHQT) is disordered. The bHLH domain occupies 161–212 (DRRKAATMRERRRLRKVNEAFEILKRRTSSNPNQRLPKVEILRNAIEYIESL). The span at 293 to 309 (TTSPIQNKATPSASDTQ) shows a compositional bias: polar residues. Positions 293 to 332 (TTSPIQNKATPSASDTQSPPSSGATAPTSLHVNFKRKCST) are disordered. The span at 310–321 (SPPSSGATAPTS) shows a compositional bias: low complexity.

As to quaternary structure, efficient DNA binding requires dimerization with another bHLH protein.

Its subcellular location is the nucleus. Its function is as follows. May play an important role in the early development of muscle. This Drosophila melanogaster (Fruit fly) protein is Myogenic-determination protein (nau).